The primary structure comprises 331 residues: Glycerol-3-phosphate dehydrogenase [NAD(P)+] (331 aa).

NADPH-binding residues include tryptophan 14, arginine 34, and lysine 107. Residues lysine 107, glycine 135, and serine 137 each contribute to the sn-glycerol 3-phosphate site. Residue alanine 139 participates in NADPH binding. Residues lysine 190, aspartate 243, serine 253, arginine 254, and asparagine 255 each coordinate sn-glycerol 3-phosphate. The Proton acceptor role is filled by lysine 190. Arginine 254 lines the NADPH pocket. The NADPH site is built by valine 278 and glutamate 280.

Belongs to the NAD-dependent glycerol-3-phosphate dehydrogenase family.

The protein localises to the cytoplasm. The catalysed reaction is sn-glycerol 3-phosphate + NAD(+) = dihydroxyacetone phosphate + NADH + H(+). It carries out the reaction sn-glycerol 3-phosphate + NADP(+) = dihydroxyacetone phosphate + NADPH + H(+). Its pathway is membrane lipid metabolism; glycerophospholipid metabolism. Its function is as follows. Catalyzes the reduction of the glycolytic intermediate dihydroxyacetone phosphate (DHAP) to sn-glycerol 3-phosphate (G3P), the key precursor for phospholipid synthesis. This chain is Glycerol-3-phosphate dehydrogenase [NAD(P)+], found in Caulobacter vibrioides (strain ATCC 19089 / CIP 103742 / CB 15) (Caulobacter crescentus).